Consider the following 180-residue polypeptide: Large ribosomal subunit protein uL5 (180 aa).

The protein belongs to the universal ribosomal protein uL5 family. In terms of assembly, part of the 50S ribosomal subunit; part of the 5S rRNA/L5/L18/L25 subcomplex. Contacts the 5S rRNA and the P site tRNA. Forms a bridge to the 30S subunit in the 70S ribosome.

Its function is as follows. This is one of the proteins that bind and probably mediate the attachment of the 5S RNA into the large ribosomal subunit, where it forms part of the central protuberance. In the 70S ribosome it contacts protein S13 of the 30S subunit (bridge B1b), connecting the 2 subunits; this bridge is implicated in subunit movement. Contacts the P site tRNA; the 5S rRNA and some of its associated proteins might help stabilize positioning of ribosome-bound tRNAs. This is Large ribosomal subunit protein uL5 from Chlamydia trachomatis serovar L2 (strain ATCC VR-902B / DSM 19102 / 434/Bu).